The chain runs to 136 residues: Protein K5 (136 aa).

Belongs to the poxviridae K5 protein family.

The sequence is that of Protein K5 from Homo sapiens (Human).